A 135-amino-acid polypeptide reads, in one-letter code: NNCPLDWLPMNGLCYKIFNQLKTWEDAEMFCRKYKPGCHLASFHRYGESLEIAEYISDYHKGQENVWIGLRDKKKDFSWEWTDRSCTDYLTWDKNQPDHYQNKEFCVELVSLTGYRLWNDQVCESKDAFLCQCKF.

Disulfide bonds link C3/C14, C31/C131, C38/C133, and C106/C123. Residues 10 to 132 (MNGLCYKIFN…CESKDAFLCQ (123 aa)) enclose the C-type lectin domain. Ca(2+)-binding residues include Q96, D98, E104, N119, and D120. The Galactose-binding motif lies at 96-98 (QPD).

This sequence belongs to the true venom lectin family. As to quaternary structure, homodecamer of disulfide-linked dimers arranged in two pseudo-5-fold symmetric pentamers. In terms of tissue distribution, expressed by the venom gland.

It localises to the secreted. In terms of biological role, galactose-binding protein which recognizes specific carbohydrate structures and agglutinates a variety of animal cells by binding to cell-surface glycoproteins and glycolipids. Calcium-dependent lectin. Shows high hemagglutinating activity (MHC=10 ng/ml). The protein is C-type lectin Cal of Crotalus atrox (Western diamondback rattlesnake).